The primary structure comprises 303 residues: D-alanine--D-alanine ligase (303 aa).

Residues 100–295 (KQLLRRHGIL…FPALIARLIE (196 aa)) form the ATP-grasp domain. 127–180 (GLGYPLFVKPNTGGSSLCLSRVTQPEGLAPALEAVFAHCGEAIVEPAIPGVEVT) lines the ATP pocket. 3 residues coordinate Mg(2+): Asp-249, Glu-262, and Asn-264.

It belongs to the D-alanine--D-alanine ligase family. The cofactor is Mg(2+). Mn(2+) is required as a cofactor.

It localises to the cytoplasm. The catalysed reaction is 2 D-alanine + ATP = D-alanyl-D-alanine + ADP + phosphate + H(+). The protein operates within cell wall biogenesis; peptidoglycan biosynthesis. Functionally, cell wall formation. The polypeptide is D-alanine--D-alanine ligase (Nitratidesulfovibrio vulgaris (strain DP4) (Desulfovibrio vulgaris)).